Consider the following 202-residue polypeptide: FMN-dependent NADH:quinone oxidoreductase 2 (202 aa).

FMN contacts are provided by residues Ser-9, 15–17, 93–96, and 137–140; these read SVS, MYNF, and SRGG.

The protein belongs to the azoreductase type 1 family. In terms of assembly, homodimer. It depends on FMN as a cofactor.

The enzyme catalyses 2 a quinone + NADH + H(+) = 2 a 1,4-benzosemiquinone + NAD(+). The catalysed reaction is N,N-dimethyl-1,4-phenylenediamine + anthranilate + 2 NAD(+) = 2-(4-dimethylaminophenyl)diazenylbenzoate + 2 NADH + 2 H(+). In terms of biological role, quinone reductase that provides resistance to thiol-specific stress caused by electrophilic quinones. Functionally, also exhibits azoreductase activity. Catalyzes the reductive cleavage of the azo bond in aromatic azo compounds to the corresponding amines. The polypeptide is FMN-dependent NADH:quinone oxidoreductase 2 (Bradyrhizobium diazoefficiens (strain JCM 10833 / BCRC 13528 / IAM 13628 / NBRC 14792 / USDA 110)).